We begin with the raw amino-acid sequence, 77 residues long: Putative antitoxin VapB24 (77 aa).

Functionally, possibly the antitoxin component of a type II toxin-antitoxin (TA) system. Its cognate toxin is VapC24 (Potential). The chain is Putative antitoxin VapB24 (vapB24) from Mycobacterium tuberculosis (strain CDC 1551 / Oshkosh).